The chain runs to 379 residues: MQDEMLGIILAGGQGTRLGKLTKDTAKPAVPFGGRYRIIDFTLSNCANSGVNTVGVITQYQPLELNAHIGSGASWGFDSLNGGVTVLQPYSSSEGEKFFQGTAHAIYQNIEYIDQQDPKYLLVLSGDHIYKMDYDAMLKYHQEKKASLTVGVIHVTNEEAKRFGMMNTDATDRIIEFEEKPEHPKSDKASMGIYIFNWPTLRDYLVKSYATDKSLEDFGKNVIPSYLANNESVYAYAFKGYWRDVGTIKSLWQANMEFLSPHNRLNIGDRYWRIYSKAEVLPPMFLTETSQVNNAMVVDSCYVAGEIDHSILSQRVSVGMGSRVVDSMIMPGATIGKNVVIDHALIGEDAVIGDDAQIIGTTDKIAVVGYHETMGVEQP.

Residues glycine 164, 179 to 180 (EK), and serine 190 each bind alpha-D-glucose 1-phosphate.

The protein belongs to the bacterial/plant glucose-1-phosphate adenylyltransferase family. As to quaternary structure, homotetramer.

The catalysed reaction is alpha-D-glucose 1-phosphate + ATP + H(+) = ADP-alpha-D-glucose + diphosphate. Its pathway is glycan biosynthesis; glycogen biosynthesis. Involved in the biosynthesis of ADP-glucose, a building block required for the elongation reactions to produce glycogen. Catalyzes the reaction between ATP and alpha-D-glucose 1-phosphate (G1P) to produce pyrophosphate and ADP-Glc. The polypeptide is Glucose-1-phosphate adenylyltransferase (Lactiplantibacillus plantarum (strain ATCC BAA-793 / NCIMB 8826 / WCFS1) (Lactobacillus plantarum)).